The following is a 708-amino-acid chain: Metal-pseudopaline receptor CntO (708 aa).

An N-terminal signal peptide occupies residues 1 to 21 (MRVSVSLVLGVGLGCSSPALW). The TBDR plug domain occupies 63-169 (RIEDIPQAIS…PGGTVNLVTK (107 aa)). The TBDR beta-barrel domain occupies 174-708 (ERFARLHASA…NLTMSLTLNY (535 aa)).

Belongs to the TonB-dependent receptor family.

It localises to the cell outer membrane. Its function is as follows. Transports the metallophore pseudopaline, which is involved in the acquisition of nickel and zinc, and thus enables bacterial growth inside the host, where metal access is limited. Is probably involved in the import of pseudopaline-metal complexes. The sequence is that of Metal-pseudopaline receptor CntO from Pseudomonas aeruginosa (strain UCBPP-PA14).